A 333-amino-acid polypeptide reads, in one-letter code: NADH-ubiquinone oxidoreductase chain 2 (333 aa).

A run of 10 helical transmembrane segments spans residues 10 to 30, 57 to 77, 91 to 111, 121 to 141, 143 to 163, 170 to 190, 192 to 212, 242 to 262, 267 to 287, and 313 to 333; these read WFIY…NIFI, LIYY…IIVY, FMVQ…FWMI, QIFL…VSMT, INSW…FYAN, KLLA…LELN, NMFI…ISFL, MYPI…MVSV, WILF…IIIL, and SYFA…LNFL.

This sequence belongs to the complex I subunit 2 family.

It is found in the mitochondrion inner membrane. It carries out the reaction a ubiquinone + NADH + 5 H(+)(in) = a ubiquinol + NAD(+) + 4 H(+)(out). Core subunit of the mitochondrial membrane respiratory chain NADH dehydrogenase (Complex I) that is believed to belong to the minimal assembly required for catalysis. Complex I functions in the transfer of electrons from NADH to the respiratory chain. The immediate electron acceptor for the enzyme is believed to be ubiquinone. The polypeptide is NADH-ubiquinone oxidoreductase chain 2 (ND2) (Apis mellifera ligustica (Common honeybee)).